A 306-amino-acid polypeptide reads, in one-letter code: Putative S-adenosyl-L-methionine-dependent methyltransferase MAP_4190c (306 aa).

Residues aspartate 129 and 158 to 159 contribute to the S-adenosyl-L-methionine site; that span reads DL.

It belongs to the UPF0677 family.

In terms of biological role, exhibits S-adenosyl-L-methionine-dependent methyltransferase activity. The protein is Putative S-adenosyl-L-methionine-dependent methyltransferase MAP_4190c of Mycolicibacterium paratuberculosis (strain ATCC BAA-968 / K-10) (Mycobacterium paratuberculosis).